The primary structure comprises 284 residues: 4-hydroxy-3-methylbut-2-enyl diphosphate reductase (284 aa).

Residue cysteine 12 participates in [4Fe-4S] cluster binding. (2E)-4-hydroxy-3-methylbut-2-enyl diphosphate-binding residues include histidine 40 and histidine 72. Positions 40 and 72 each coordinate dimethylallyl diphosphate. Residues histidine 40 and histidine 72 each contribute to the isopentenyl diphosphate site. Cysteine 94 provides a ligand contact to [4Fe-4S] cluster. Residue histidine 122 coordinates (2E)-4-hydroxy-3-methylbut-2-enyl diphosphate. Residue histidine 122 participates in dimethylallyl diphosphate binding. Histidine 122 contributes to the isopentenyl diphosphate binding site. Glutamate 124 (proton donor) is an active-site residue. Threonine 161 is a (2E)-4-hydroxy-3-methylbut-2-enyl diphosphate binding site. Position 193 (cysteine 193) interacts with [4Fe-4S] cluster. Residues serine 221, asparagine 223, and serine 264 each contribute to the (2E)-4-hydroxy-3-methylbut-2-enyl diphosphate site. Dimethylallyl diphosphate contacts are provided by serine 221, asparagine 223, and serine 264. Residues serine 221, asparagine 223, and serine 264 each coordinate isopentenyl diphosphate.

It belongs to the IspH family. [4Fe-4S] cluster is required as a cofactor.

The enzyme catalyses isopentenyl diphosphate + 2 oxidized [2Fe-2S]-[ferredoxin] + H2O = (2E)-4-hydroxy-3-methylbut-2-enyl diphosphate + 2 reduced [2Fe-2S]-[ferredoxin] + 2 H(+). It carries out the reaction dimethylallyl diphosphate + 2 oxidized [2Fe-2S]-[ferredoxin] + H2O = (2E)-4-hydroxy-3-methylbut-2-enyl diphosphate + 2 reduced [2Fe-2S]-[ferredoxin] + 2 H(+). Its pathway is isoprenoid biosynthesis; dimethylallyl diphosphate biosynthesis; dimethylallyl diphosphate from (2E)-4-hydroxy-3-methylbutenyl diphosphate: step 1/1. The protein operates within isoprenoid biosynthesis; isopentenyl diphosphate biosynthesis via DXP pathway; isopentenyl diphosphate from 1-deoxy-D-xylulose 5-phosphate: step 6/6. Functionally, catalyzes the conversion of 1-hydroxy-2-methyl-2-(E)-butenyl 4-diphosphate (HMBPP) into a mixture of isopentenyl diphosphate (IPP) and dimethylallyl diphosphate (DMAPP). Acts in the terminal step of the DOXP/MEP pathway for isoprenoid precursor biosynthesis. The sequence is that of 4-hydroxy-3-methylbut-2-enyl diphosphate reductase from Dehalococcoides mccartyi (strain ATCC BAA-2266 / KCTC 15142 / 195) (Dehalococcoides ethenogenes (strain 195)).